Consider the following 166-residue polypeptide: Regulatory protein RecX (166 aa).

The protein belongs to the RecX family.

Its subcellular location is the cytoplasm. Modulates RecA activity. This is Regulatory protein RecX from Klebsiella pneumoniae (strain 342).